We begin with the raw amino-acid sequence, 124 residues long: MALTQEDIINAVAEMSVMEVAELISAMEEKFGVSAAAAVVAGPGAGGEGEAAEEQTEFDLVLTGAGDKKVNVIKVVREITGLGLKEAKGAVDGVPATLKEGMSKEDAEAAKTKLEEAGASVELK.

A compositionally biased stretch (basic and acidic residues) spans 102–116 (MSKEDAEAAKTKLEE). Positions 102-124 (MSKEDAEAAKTKLEEAGASVELK) are disordered.

This sequence belongs to the bacterial ribosomal protein bL12 family. Homodimer. Part of the ribosomal stalk of the 50S ribosomal subunit. Forms a multimeric L10(L12)X complex, where L10 forms an elongated spine to which 2 to 4 L12 dimers bind in a sequential fashion. Binds GTP-bound translation factors.

Forms part of the ribosomal stalk which helps the ribosome interact with GTP-bound translation factors. Is thus essential for accurate translation. The polypeptide is Large ribosomal subunit protein bL12 (Chromohalobacter salexigens (strain ATCC BAA-138 / DSM 3043 / CIP 106854 / NCIMB 13768 / 1H11)).